The following is a 62-amino-acid chain: Potassium channel toxin alpha-KTx Tx790 (62 aa).

Residues 1 to 18 (MQKLFIVLVLFCILRLDA) form the signal peptide. 3 cysteine pairs are disulfide-bonded: cysteine 28-cysteine 46, cysteine 33-cysteine 59, and cysteine 37-cysteine 61.

It belongs to the short scorpion toxin superfamily. Potassium channel inhibitor family. Alpha-KTx 23 subfamily. Expressed by the venom gland.

The protein resides in the secreted. In terms of biological role, may block potassium channels. In Buthus israelis (Israeli scorpion), this protein is Potassium channel toxin alpha-KTx Tx790.